The sequence spans 535 residues: MTIDHEVKRRRTFAIISHPDAGKTTLTEKLLLFAGAIHIAGSVKARKASRHATSDWMEIEKQRGISVASSVMQMEYRGCVINLLDTPGHQDFSEDTYRVLTAVDAALMVIDAANGVESQTLRLLQVCRARNTPIITFVNKLDREVREPLDLIDEIERTLGMDVVPFTWPVGSGKRFHGVYDLRHELMRVFRPGMDHAEQKDTTIITDLGDPAVTKRFGANLEQARQEIDLIKGAAPEFDQAAFLAGQQTPVFFGSAINNFGVQEVLDTLVDLAPPPGTRKAIQREILPTENKFSGVVFKIQANMNPAHRDRIAFVRICSGEFRRGMSLKVVRSGKDVRTSTVVSFLSQRRELLETAYAGDIIGIPNHGTLQLADTLTEGDNLQFTGLPFFAPEIFQTVEIADPLRSKQLKLGLTQLGEEGAIQVFRPHLGSILLLGAVGQLQFEVVTHRLKHEYGVEARVAPAKYQLARWVTAEMPRELQRFIDANTHRIAYDAVDAPTFLASFSAEISVAEENWPGIRFHKMREHAGLLFQTAS.

A tr-type G domain is found at 8–277; that stretch reads KRRRTFAIIS…TLVDLAPPPG (270 aa). GTP-binding positions include 17–24, 85–89, and 139–142; these read SHPDAGKT, DTPGH, and NKLD.

This sequence belongs to the TRAFAC class translation factor GTPase superfamily. Classic translation factor GTPase family. PrfC subfamily.

Its subcellular location is the cytoplasm. Functionally, increases the formation of ribosomal termination complexes and stimulates activities of RF-1 and RF-2. It binds guanine nucleotides and has strong preference for UGA stop codons. It may interact directly with the ribosome. The stimulation of RF-1 and RF-2 is significantly reduced by GTP and GDP, but not by GMP. This chain is Peptide chain release factor 3, found in Nitrosomonas eutropha (strain DSM 101675 / C91 / Nm57).